The primary structure comprises 184 residues: Adenine phosphoribosyltransferase (184 aa).

The protein belongs to the purine/pyrimidine phosphoribosyltransferase family. In terms of assembly, homodimer.

The protein resides in the cytoplasm. The enzyme catalyses AMP + diphosphate = 5-phospho-alpha-D-ribose 1-diphosphate + adenine. It participates in purine metabolism; AMP biosynthesis via salvage pathway; AMP from adenine: step 1/1. In terms of biological role, catalyzes a salvage reaction resulting in the formation of AMP, that is energically less costly than de novo synthesis. This Shewanella putrefaciens (strain CN-32 / ATCC BAA-453) protein is Adenine phosphoribosyltransferase.